The primary structure comprises 346 residues: fMet-Leu-Phe receptor (346 aa).

Asparagine 1 and asparagine 7 each carry an N-linked (GlcNAc...) asparagine glycan. The Extracellular segment spans residues 1-24 (NSSLPTNISGGTPAVSAGYLFLDI). Residues 25-47 (ITYLVYAVTFVLGVLGNGLVIWV) traverse the membrane as a helical segment. Over 48 to 58 (AGFRMTHTVTT) the chain is Cytoplasmic. Residues 59 to 80 (ISYLNLAVADFCFTSTLPFFMV) traverse the membrane as a helical segment. The Extracellular portion of the chain corresponds to 81–97 (RKAMGGHWPFGWFLCKF). Cysteine 95 and cysteine 173 are oxidised to a cystine. Residues 98–118 (IFTIVDINLFGSVFLIALIAL) form a helical membrane-spanning segment. The Cytoplasmic segment spans residues 119-137 (DRCVCVLHPVWTQNHRTVS). The chain crosses the membrane as a helical span at residues 138–159 (LAKKVIIGPWVMALLLTLPVII). Residues 160 to 202 (RVTTVPGKMGTVSCTFNFSPWTNDPKERIKVAIAMLTVRGIIR) are Extracellular-facing. A helical membrane pass occupies residues 203 to 223 (FIIGFSAPMSIVAVSYGLIAT). Residues 224–239 (KIHKQGLIKSSRPLRV) lie on the Cytoplasmic side of the membrane. Residues 240–263 (LSFVAAAFFLCWSPYQVVAFIATV) traverse the membrane as a helical segment. At 264 to 282 (RIRELLQGMYKEISIAVDV) the chain is on the extracellular side. A helical membrane pass occupies residues 283–302 (TSALAFFNSCLNPMLYVFMG). The Cytoplasmic segment spans residues 303 to 346 (QDFRERLIHSLPASLERALTEASTQTSDTATNSTLPSAEVALQA). Residues 324–338 (ASTQTSDTATNSTLP) show a composition bias toward polar residues. A disordered region spans residues 324–346 (ASTQTSDTATNSTLPSAEVALQA).

Belongs to the G-protein coupled receptor 1 family. Phosphorylated; which is necessary for desensitization.

Its subcellular location is the cell membrane. High affinity receptor for N-formyl-methionyl peptides (fMLP), which are powerful neutrophil chemotactic factors. Binding of fMLP to the receptor stimulates intracellular calcium mobilization and superoxide anion release. This response is mediated via a G-protein that activates a phosphatidylinositol-calcium second messenger system. Receptor for TAFA4, mediates its effects on chemoattracting macrophages, promoting phagocytosis and increasing ROS release. Receptor for cathepsin CTSG, leading to increased phagocyte chemotaxis. The polypeptide is fMet-Leu-Phe receptor (FPR1) (Pongo pygmaeus (Bornean orangutan)).